The chain runs to 903 residues: Calcium-activated chloride channel regulator 1 (903 aa).

Positions 1 to 21 (MVPRLTVILFLTLHLLPGMKS) are cleaved as a signal peptide. The metalloprotease domain stretch occupies residues 45 to 199 (DEKLIQNIKE…HITGTNVIVK (155 aa)). Histidine 155 contacts Zn(2+). Residue glutamate 156 is part of the active site. Histidine 159 and aspartate 166 together coordinate Zn(2+). The VWFA domain maps to 308 to 476 (VVCLVLDKSG…NGLTNAFSRI (169 aa)). N-linked (GlcNAc...) asparagine glycans are attached at residues asparagine 360, asparagine 372, asparagine 504, and asparagine 842. A helical transmembrane segment spans residues 883-903 (GTKISAINLAIFALAMILSIV).

It belongs to the CLCR family. Glycosylated. Post-translationally, the 125-kDa product is autoproteolytically processed by the metalloprotease domain and yields to two cell-surface-associated subunits, a 90-kDa protein and a group of 37- to 41-kDa proteins. The cleavage is necessary for calcium-activated chloride channel (CaCC) activation activity. Trachea.

It localises to the apical cell membrane. Its function is as follows. May be involved in mediating calcium-activated chloride conductance. May play critical roles in goblet cell metaplasia, mucus hypersecretion, cystic fibrosis and AHR. May be involved in the regulation of mucus production and/or secretion by goblet cells. Involved in the regulation of tissue inflammation in the innate immune response. May play a role as a tumor suppressor. Induces MUC5AC. This is Calcium-activated chloride channel regulator 1 from Bos taurus (Bovine).